The chain runs to 283 residues: Aldo-keto reductase Mmcs_1938 (283 aa).

The Proton donor role is filled by Tyr-58. Gly-196, Leu-198, Val-200, Ile-236, Arg-238, Ser-239, Ala-240, Arg-244, Ser-247, Asn-248, and Arg-274 together coordinate NADPH.

Belongs to the aldo/keto reductase family.

The protein is Aldo-keto reductase Mmcs_1938 of Mycobacterium sp. (strain MCS).